The sequence spans 431 residues: Glucose-1-phosphate adenylyltransferase (431 aa).

Lys-39 contacts beta-D-fructose 1,6-bisphosphate. AMP-binding residues include Arg-40, His-46, and Arg-52. Tyr-114 provides a ligand contact to alpha-D-glucose 1-phosphate. Residue Arg-130 coordinates AMP. Alpha-D-glucose 1-phosphate contacts are provided by residues Gly-179, 194–195 (EK), and Ser-212. Residues Glu-370 and Arg-386 each coordinate AMP. Residues 419-423 (REMLR) and 429-431 (QER) contribute to the beta-D-fructose 1,6-bisphosphate site.

The protein belongs to the bacterial/plant glucose-1-phosphate adenylyltransferase family. In terms of assembly, homotetramer.

The catalysed reaction is alpha-D-glucose 1-phosphate + ATP + H(+) = ADP-alpha-D-glucose + diphosphate. Its pathway is glycan biosynthesis; glycogen biosynthesis. With respect to regulation, allosterically activated by fructose-1,6-bisphosphate (F16BP) and inhibited by AMP. Its function is as follows. Involved in the biosynthesis of ADP-glucose, a building block required for the elongation reactions to produce glycogen. Catalyzes the reaction between ATP and alpha-D-glucose 1-phosphate (G1P) to produce pyrophosphate and ADP-Glc. The chain is Glucose-1-phosphate adenylyltransferase from Escherichia coli O7:K1 (strain IAI39 / ExPEC).